Here is an 80-residue protein sequence, read N- to C-terminus: RNA-binding protein Hfq (80 aa).

In terms of domain architecture, Sm spans 10-69; that stretch reads DPFLNLLRKEHVPVSIYLVNGIKLQGHIESFDQYVVLLRNTVTQMVYKHAISTVVPGRPV.

It belongs to the Hfq family. As to quaternary structure, homohexamer.

Functionally, RNA chaperone that binds small regulatory RNA (sRNAs) and mRNAs to facilitate mRNA translational regulation in response to envelope stress, environmental stress and changes in metabolite concentrations. Also binds with high specificity to tRNAs. This Leptothrix cholodnii (strain ATCC 51168 / LMG 8142 / SP-6) (Leptothrix discophora (strain SP-6)) protein is RNA-binding protein Hfq.